The primary structure comprises 218 residues: MFINHLHNTDIILASGSPRRKQLLEDAGINFRIHTKNVEENYPVYLQRSEIPLYLSKIKAHAVKADFPDSLIIAADTIVVQRRDVFNKPGSAEEAKDMLRKLSNNMHEVITGVTICYGEKERSFYDITEVFFKPLSETYINYYIENHKPFDKAGAYGIQEWLGMVGIKKIQGDFYNVMGLPVSKLIDELEKMFNPELELNQINSNRPEEPNKYLYFGI.

D76 (proton acceptor) is an active-site residue.

It belongs to the Maf family. YhdE subfamily. A divalent metal cation serves as cofactor.

Its subcellular location is the cytoplasm. It catalyses the reaction dTTP + H2O = dTMP + diphosphate + H(+). It carries out the reaction UTP + H2O = UMP + diphosphate + H(+). In terms of biological role, nucleoside triphosphate pyrophosphatase that hydrolyzes dTTP and UTP. May have a dual role in cell division arrest and in preventing the incorporation of modified nucleotides into cellular nucleic acids. This chain is dTTP/UTP pyrophosphatase, found in Cytophaga hutchinsonii (strain ATCC 33406 / DSM 1761 / CIP 103989 / NBRC 15051 / NCIMB 9469 / D465).